A 402-amino-acid chain; its full sequence is Elongation factor Tu (402 aa).

One can recognise a tr-type G domain in the interval 16–211 (KEHINIGTIG…AVDSYIDSPV (196 aa)). The interval 25–32 (GHVDHGKT) is G1. GTP is bound at residue 25 to 32 (GHVDHGKT). Residue threonine 32 coordinates Mg(2+). The tract at residues 66 to 70 (GITIN) is G2. Positions 87–90 (DCPG) are G3. GTP is bound by residues 87–91 (DCPGH) and 142–145 (NKID). Positions 142-145 (NKID) are G4. The segment at 181–183 (SAR) is G5.

The protein belongs to the TRAFAC class translation factor GTPase superfamily. Classic translation factor GTPase family. EF-Tu/EF-1A subfamily. In terms of assembly, monomer.

Its subcellular location is the cytoplasm. The enzyme catalyses GTP + H2O = GDP + phosphate + H(+). In terms of biological role, GTP hydrolase that promotes the GTP-dependent binding of aminoacyl-tRNA to the A-site of ribosomes during protein biosynthesis. This Mesomycoplasma hyopneumoniae (strain J / ATCC 25934 / NCTC 10110) (Mycoplasma hyopneumoniae) protein is Elongation factor Tu.